The sequence spans 376 residues: Endo-1,4-beta-xylanase A (376 aa).

A signal peptide spans 1-18 (MHLASSLFLLATLPFGFA). A GH10 domain is found at 55 to 355 (QRERAGLEDK…HPAYYGVVEA (301 aa)). Residue asparagine 100 is glycosylated (N-linked (GlcNAc...) asparagine). The Proton donor role is filled by glutamate 170. The active-site Nucleophile is the glutamate 277. Asparagine 358 carries an N-linked (GlcNAc...) asparagine glycan.

This sequence belongs to the glycosyl hydrolase 10 (cellulase F) family.

It localises to the secreted. The catalysed reaction is Endohydrolysis of (1-&gt;4)-beta-D-xylosidic linkages in xylans.. Its pathway is glycan degradation; xylan degradation. With respect to regulation, partial inhibition of activity is detected in the presence of Ag(+), Cu2(+) and SDS. Like most fungal xylanases, activity is completely inhibited by Hg(2+) since Hg(2+) could interact with tryptophan residues and oxidize the indole ring. Beta-mercaptoethanol enhances the enzymatic activity by counteracting the oxidation effects of the S-S linkage between cysteine residues. Endo-1,4-beta-xylanase involved in the hydrolysis of xylan, a major structural heterogeneous polysaccharide found in plant biomass representing the second most abundant polysaccharide in the biosphere, after cellulose. Is most active on birchwood xylan (defined as 100%), moderate on beechwood xylan (96.8%) and soluble wheat arabinoxylan (84.5%), and weak on insoluble wheat arabinoxylan (19.7%). Hydrolyzes substrates into a mixture of xylobiose and xylotriose, but no xylose. No activity was detected in the presence of barley beta-glucan, carboxymethyl cellulose-sodium (CMC-Na), and Avicel. Acts as an alkali-tolerant xylanase, exhibiting 68.8% of the activity at pH 9.0, and even 31.8% at pH 10.0. The polypeptide is Endo-1,4-beta-xylanase A (Humicola insolens (Soft-rot fungus)).